The sequence spans 357 residues: UDP-N-acetylglucosamine--N-acetylmuramyl-(pentapeptide) pyrophosphoryl-undecaprenol N-acetylglucosamine transferase (357 aa).

Residues 12–14 (TGG), asparagine 124, arginine 163, serine 189, isoleucine 243, 262–267 (ALTVSE), and glutamine 288 each bind UDP-N-acetyl-alpha-D-glucosamine.

Belongs to the glycosyltransferase 28 family. MurG subfamily.

The protein resides in the cell inner membrane. It carries out the reaction di-trans,octa-cis-undecaprenyl diphospho-N-acetyl-alpha-D-muramoyl-L-alanyl-D-glutamyl-meso-2,6-diaminopimeloyl-D-alanyl-D-alanine + UDP-N-acetyl-alpha-D-glucosamine = di-trans,octa-cis-undecaprenyl diphospho-[N-acetyl-alpha-D-glucosaminyl-(1-&gt;4)]-N-acetyl-alpha-D-muramoyl-L-alanyl-D-glutamyl-meso-2,6-diaminopimeloyl-D-alanyl-D-alanine + UDP + H(+). The protein operates within cell wall biogenesis; peptidoglycan biosynthesis. Functionally, cell wall formation. Catalyzes the transfer of a GlcNAc subunit on undecaprenyl-pyrophosphoryl-MurNAc-pentapeptide (lipid intermediate I) to form undecaprenyl-pyrophosphoryl-MurNAc-(pentapeptide)GlcNAc (lipid intermediate II). The protein is UDP-N-acetylglucosamine--N-acetylmuramyl-(pentapeptide) pyrophosphoryl-undecaprenol N-acetylglucosamine transferase of Pseudomonas paraeruginosa (strain DSM 24068 / PA7) (Pseudomonas aeruginosa (strain PA7)).